A 64-amino-acid chain; its full sequence is Large ribosomal subunit protein bL35 (64 aa).

This sequence belongs to the bacterial ribosomal protein bL35 family.

This is Large ribosomal subunit protein bL35 from Coxiella burnetii (strain RSA 331 / Henzerling II).